The chain runs to 517 residues: Putative pumilio homolog 21 (517 aa).

Disordered stretches follow at residues 33-57 (NHQE…PPLL), 69-94 (KNNQ…PPLV), 107-130 (NHQE…PLLT), and 175-201 (FTPS…PPLS). A compositionally biased stretch (low complexity) spans 42–51 (NTNINSNNNH). The span at 69–84 (KNNQEPGESGNTTINR) shows a compositional bias: polar residues. The PUM-HD domain occupies 148-502 (ESSNNNYPNL…NTLRVIQEEI (355 aa)). The span at 177 to 190 (PSSLTQPDDSSSRY) shows a compositional bias: polar residues. The Pumilio 1; degenerate repeat unit spans residues 258-293 (TTKRIFLHLATNQYGSQALRILFRRSPSLDHLLFCA). Residues 294-328 (VDTNFFLLMSDKYGRGLIIPAIRAVDKTKKESLYK) form a Pumilio 2 repeat. One copy of the Pumilio 3; degenerate repeat lies at 329 to 363 (LTYEYTLHLARLETGCLALNNVLQEIRGIYRDLIF). Pumilio repeat units follow at residues 364-400 (ECVA…AIAE), 401-437 (RLRG…EEFR), and 438-473 (GNAK…PLLR).

The protein resides in the cytoplasm. Its function is as follows. Sequence-specific RNA-binding protein that regulates translation and mRNA stability by binding the 3'-UTR of target mRNAs. The polypeptide is Putative pumilio homolog 21 (APUM21) (Arabidopsis thaliana (Mouse-ear cress)).